Here is a 290-residue protein sequence, read N- to C-terminus: Endo-1,4-beta-xylanase B (290 aa).

The first 19 residues, 1–19 (MVSFNSLLVAVSAATCALA), serve as a signal peptide directing secretion. Asn26 is a glycosylation site (N-linked (GlcNAc...) asparagine). The 189-residue stretch at 34 to 222 (QSTPAGTGTN…SSGSSTVTVN (189 aa)) folds into the GH11 domain. The Nucleophile role is filled by Glu118. Residue Glu209 is the Proton donor of the active site. The segment at 223 to 248 (PAGGVTSPIAPTGPSSVSTTPSGPSS) is disordered. Low complexity predominate over residues 234–248 (TGPSSVSTTPSGPSS). A CBM1 domain is found at 255-290 (TCSALYGQCGGQGWTGPTCCSSGTCKFSNNWYSQCL).

It belongs to the glycosyl hydrolase 11 (cellulase G) family.

Its subcellular location is the secreted. The enzyme catalyses Endohydrolysis of (1-&gt;4)-beta-D-xylosidic linkages in xylans.. The protein operates within glycan degradation; xylan degradation. Its function is as follows. Endo-1,4-beta-xylanase involved in the hydrolysis of xylan, a major structural heterogeneous polysaccharide found in plant biomass representing the second most abundant polysaccharide in the biosphere, after cellulose. The polypeptide is Endo-1,4-beta-xylanase B (xynB) (Phanerodontia chrysosporium (White-rot fungus)).